The chain runs to 323 residues: Methenyltetrahydromethanopterin cyclohydrolase (323 aa).

Belongs to the MCH family.

The protein localises to the cytoplasm. The catalysed reaction is 5,10-methenyl-5,6,7,8-tetrahydromethanopterin + H2O = N(5)-formyl-5,6,7,8-tetrahydromethanopterin + H(+). It functions in the pathway one-carbon metabolism; methanogenesis from CO(2); 5,10-methenyl-5,6,7,8-tetrahydromethanopterin from CO(2): step 3/3. Functionally, catalyzes the reversible interconversion of 5-formyl-H(4)MPT to methenyl-H(4)MPT(+). This Methanobrevibacter smithii (strain ATCC 35061 / DSM 861 / OCM 144 / PS) protein is Methenyltetrahydromethanopterin cyclohydrolase.